A 316-amino-acid polypeptide reads, in one-letter code: tRNA dimethylallyltransferase (316 aa).

Glycine 17 to threonine 24 is a binding site for ATP. Threonine 19–threonine 24 provides a ligand contact to substrate. Interaction with substrate tRNA regions lie at residues aspartate 42–leucine 45, glutamine 166–arginine 170, and arginine 247–arginine 252.

This sequence belongs to the IPP transferase family. In terms of assembly, monomer. Mg(2+) serves as cofactor.

It carries out the reaction adenosine(37) in tRNA + dimethylallyl diphosphate = N(6)-dimethylallyladenosine(37) in tRNA + diphosphate. Functionally, catalyzes the transfer of a dimethylallyl group onto the adenine at position 37 in tRNAs that read codons beginning with uridine, leading to the formation of N6-(dimethylallyl)adenosine (i(6)A). This chain is tRNA dimethylallyltransferase, found in Citrobacter koseri (strain ATCC BAA-895 / CDC 4225-83 / SGSC4696).